Consider the following 124-residue polypeptide: Small ribosomal subunit protein uS12 (124 aa).

A 3-methylthioaspartic acid modification is found at D89.

Belongs to the universal ribosomal protein uS12 family. As to quaternary structure, part of the 30S ribosomal subunit. Contacts proteins S8 and S17. May interact with IF1 in the 30S initiation complex.

Its function is as follows. With S4 and S5 plays an important role in translational accuracy. Functionally, interacts with and stabilizes bases of the 16S rRNA that are involved in tRNA selection in the A site and with the mRNA backbone. Located at the interface of the 30S and 50S subunits, it traverses the body of the 30S subunit contacting proteins on the other side and probably holding the rRNA structure together. The combined cluster of proteins S8, S12 and S17 appears to hold together the shoulder and platform of the 30S subunit. The polypeptide is Small ribosomal subunit protein uS12 (Sodalis glossinidius (strain morsitans)).